The chain runs to 213 residues: Large ribosomal subunit protein uL1 (213 aa).

The protein belongs to the universal ribosomal protein uL1 family. As to quaternary structure, part of the 50S ribosomal subunit.

Its function is as follows. Binds directly to 23S rRNA. Probably involved in E site tRNA release. Functionally, protein L1 is also a translational repressor protein, it controls the translation of its operon by binding to its mRNA. In Methanocella arvoryzae (strain DSM 22066 / NBRC 105507 / MRE50), this protein is Large ribosomal subunit protein uL1.